Reading from the N-terminus, the 148-residue chain is Large ribosomal subunit protein uL15 (148 aa).

Residues M1–E51 form a disordered region. A compositionally biased stretch (gly residues) spans R21–S31.

This sequence belongs to the universal ribosomal protein uL15 family. In terms of assembly, part of the 50S ribosomal subunit.

Functionally, binds to the 23S rRNA. This Phocaeicola vulgatus (strain ATCC 8482 / DSM 1447 / JCM 5826 / CCUG 4940 / NBRC 14291 / NCTC 11154) (Bacteroides vulgatus) protein is Large ribosomal subunit protein uL15.